A 141-amino-acid chain; its full sequence is Large ribosomal subunit protein uL11 (141 aa).

This sequence belongs to the universal ribosomal protein uL11 family. Part of the ribosomal stalk of the 50S ribosomal subunit. Interacts with L10 and the large rRNA to form the base of the stalk. L10 forms an elongated spine to which L12 dimers bind in a sequential fashion forming a multimeric L10(L12)X complex. One or more lysine residues are methylated.

In terms of biological role, forms part of the ribosomal stalk which helps the ribosome interact with GTP-bound translation factors. The protein is Large ribosomal subunit protein uL11 of Synechococcus sp. (strain WH7803).